The primary structure comprises 239 residues: MINVLIIDDDAMVAELNRRYVAQIPGFQCCGTASTLEKAKEIIFNSDTPIDLILLDIYMQKENGLDLLPVLHNARCKSDVIVISSAADAATIKDSLHYGVVDYLIKPFQASRFEEALTGWRQKKMALEKHQYYDQAELDQLIHGSSSNEQDPRRLPKGLTPQTLRTLCQWIDAHQDYEFSTDELANEVNISRVSCRKYLIWLVNCHILFTSIHYGVTGRPVYRYRIQAEHYSLLKQYCQ.

One can recognise a Response regulatory domain in the interval 3 to 121 (NVLIIDDDAM…RFEEALTGWR (119 aa)). 4-aspartylphosphate is present on Asp-56. Residues 181-200 (TDELANEVNISRVSCRKYLI) constitute a DNA-binding region (H-T-H motif).

Phosphorylated and activated by DcuS.

It is found in the cytoplasm. Its function is as follows. Member of the two-component regulatory system DcuR/DcuS. Involved in the C4-dicarboxylate-stimulated regulation of the genes encoding the anaerobic fumarate respiratory system (frdABCD; nuoAN; dcuB; dcuC; sdhCDAB; etc.). Weakly regulates the aerobic C4-dicarboxylate transporter dctA. In Escherichia coli O157:H7, this protein is Transcriptional regulatory protein DcuR (dcuR).